Reading from the N-terminus, the 546-residue chain is Chaperonin GroEL (546 aa).

ATP contacts are provided by residues 30–33, K51, 87–91, G415, 479–481, and D495; these read TLGP, DGTTT, and NAA. A disordered region spans residues 525–546; that stretch reads PEPKKDMPPMPGGGMGGMGGMY. The segment covering 536-546 has biased composition (gly residues); it reads GGGMGGMGGMY.

Belongs to the chaperonin (HSP60) family. Forms a cylinder of 14 subunits composed of two heptameric rings stacked back-to-back. Interacts with the co-chaperonin GroES.

Its subcellular location is the cytoplasm. It catalyses the reaction ATP + H2O + a folded polypeptide = ADP + phosphate + an unfolded polypeptide.. Together with its co-chaperonin GroES, plays an essential role in assisting protein folding. The GroEL-GroES system forms a nano-cage that allows encapsulation of the non-native substrate proteins and provides a physical environment optimized to promote and accelerate protein folding. The sequence is that of Chaperonin GroEL from Solidesulfovibrio magneticus (strain ATCC 700980 / DSM 13731 / RS-1) (Desulfovibrio magneticus).